A 260-amino-acid polypeptide reads, in one-letter code: MTTGLLQGKKGLITGIANNMSISWAIAQLAKKHGAELWFTYQSGVLEKRVKPLAKEIGCNFVSELDVTKPKSISNLFDDIKEKWGSFDFLLHGMAFADKNELKGRYVDTSLENFHNSLHISCYSLLELSRSAEALMHNGGSIVTLTYYGAEKVIPNYNVMGVAKAALEASIKYLANDMGENNIRVNAISAGPIKTLASSAIGDFSTMLKSHAATAPLKRNTTQEDVGGAAVYLFSELSKGVTGEIHYVDCGYNIMGSTKL.

Residues Gly-15, 21–22, Gln-42, 66–67, and Met-94 each bind NAD(+); these read SI and DV. Ala-97 contributes to the substrate binding site. Active-site proton acceptor residues include Tyr-147 and Tyr-157. Residues Lys-164 and 193–197 contribute to the NAD(+) site; that span reads IKTLA.

The protein belongs to the short-chain dehydrogenases/reductases (SDR) family. FabI subfamily. As to quaternary structure, homotetramer.

The enzyme catalyses a 2,3-saturated acyl-[ACP] + NAD(+) = a (2E)-enoyl-[ACP] + NADH + H(+). It participates in lipid metabolism; fatty acid biosynthesis. Its function is as follows. Catalyzes the reduction of a carbon-carbon double bond in an enoyl moiety that is covalently linked to an acyl carrier protein (ACP). Involved in the elongation cycle of fatty acid which are used in the lipid metabolism. The polypeptide is Enoyl-[acyl-carrier-protein] reductase [NADH] FabI (fabI) (Rickettsia conorii (strain ATCC VR-613 / Malish 7)).